We begin with the raw amino-acid sequence, 401 residues long: MMGLGNGRRSMKSPPLVLAALVACIIVLGFNYWIASSRSVDLQTRIMELEGRVRRAAAERGAVELKKNEFQGELEKQREQLDKIQSSHNFQLESVNKLYQDEKAVLVNNITTGERLIRVLQDQLKTLQRNYGRLQQDVLQFQKNQTNLERKFSYDLSQCINQMKEVKEQCEERIEEVTKKGNEAVASRDLSENNDQRQQLQALSEPQPRLQAAGLPHTEVPQGKGNVLGNSKSQTPAPSSEVVLDSKRQVEKEETNEIQVVNEEPQRDRLPQEPGREQVVEDRPVGGRGFGGAGELGQTPQVQAALSVSQENPEMEGPERDQLVIPDGQEEEQEAAGEGRNQQKLRGEDDYNMDENEAESETDKQAALAGNDRNIDVFNVEDQKRDTINLLDQREKRNHTL.

Met1 bears the N-acetylmethionine mark. Residues 1–12 (MMGLGNGRRSMK) lie on the Cytoplasmic side of the membrane. A helical; Signal-anchor for type II membrane protein membrane pass occupies residues 13–35 (SPPLVLAALVACIIVLGFNYWIA). Residues 36–401 (SSRSVDLQTR…DQREKRNHTL (366 aa)) are Lumenal-facing. The stretch at 40–205 (VDLQTRIMEL…QRQQLQALSE (166 aa)) forms a coiled coil. Asn109 carries an N-linked (GlcNAc...) (complex) asparagine glycan. The N-linked (GlcNAc...) asparagine glycan is linked to Asn144. Positions 178 to 401 (TKKGNEAVAS…DQREKRNHTL (224 aa)) are disordered. Ser187 carries the phosphoserine modification. A compositionally biased stretch (polar residues) spans 228 to 238 (LGNSKSQTPAP). 2 stretches are compositionally biased toward basic and acidic residues: residues 244–255 (LDSKRQVEKEET) and 264–285 (EPQR…DRPV). A compositionally biased stretch (gly residues) spans 286-295 (GGRGFGGAGE). The segment covering 298–312 (QTPQVQAALSVSQEN) has biased composition (polar residues). Ser309 is subject to Phosphoserine; by FAM20C. The segment covering 350–360 (DYNMDENEAES) has biased composition (acidic residues). The segment covering 381-395 (EDQKRDTINLLDQRE) has biased composition (basic and acidic residues). Asn398 carries an N-linked (GlcNAc...) asparagine glycan.

Belongs to the GOLM family. As to quaternary structure, interacts with DYM. Post-translationally, glycosylated. In terms of processing, phosphorylation sites are present in the extracellular medium. Widely expressed. Highly expressed in colon, prostate, trachea and stomach. Expressed at lower level in testis, muscle, lymphoid tissues, white blood cells and spleen. Predominantly expressed by cells of the epithelial lineage. Expressed at low level in normal liver. Expression significantly increases in virus (HBV, HCV) infected liver. Expression does not increase in liver disease due to non-viral causes (alcohol-induced liver disease, autoimmune hepatitis). Increased expression in hepatocytes appears to be a general feature of advanced liver disease. In liver tissue from patients with adult giant-cell hepatitis (GCH), it is strongly expressed in hepatocytes-derived syncytial giant cells. Constitutively expressed by biliary epithelial cells but not by hepatocytes.

It localises to the golgi apparatus. The protein resides in the cis-Golgi network membrane. Its function is as follows. Unknown. Cellular response protein to viral infection. The chain is Golgi membrane protein 1 (GOLM1) from Homo sapiens (Human).